A 364-amino-acid polypeptide reads, in one-letter code: Glycerophosphodiester phosphodiesterase (364 aa).

Residues 1–18 form the signal peptide; the sequence is MKLKTLALSLLAAGVLAG. Residue cysteine 19 is the site of N-palmitoyl cysteine attachment. The S-diacylglycerol cysteine moiety is linked to residue cysteine 19. Positions 35–360 constitute a GP-PDE domain; that stretch reads KIIIAHRGAS…DFPDTGVEFL (326 aa). Histidine 40 functions as the Proton acceptor in the catalytic mechanism. Ca(2+) contacts are provided by glutamate 67 and aspartate 69. The Proton donor role is filled by histidine 82. Glutamate 175 serves as a coordination point for Ca(2+).

It belongs to the glycerophosphoryl diester phosphodiesterase family. Ca(2+) serves as cofactor. Post-translationally, contains both ester- and amide-linked fatty acids.

It localises to the cell outer membrane. It catalyses the reaction a sn-glycero-3-phosphodiester + H2O = an alcohol + sn-glycerol 3-phosphate + H(+). Glycerophosphodiester phosphodiesterase hydrolyzes glycerophosphodiesters into glycerol-3-phosphate (G3P) and the corresponding alcohol. Has a specific affinity for human immunoglobulin D myeloma protein. In Haemophilus influenzae (strain ATCC 51907 / DSM 11121 / KW20 / Rd), this protein is Glycerophosphodiester phosphodiesterase (glpQ).